Reading from the N-terminus, the 569-residue chain is Urease subunit alpha (569 aa).

The Urease domain occupies 131 to 569 (GGIDTHIHFI…LPLAQRYLLL (439 aa)). The Ni(2+) site is built by His136, His138, and Lys219. Position 219 is an N6-carboxylysine (Lys219). His221 serves as a coordination point for substrate. Residues His248 and His274 each contribute to the Ni(2+) site. Catalysis depends on His322, which acts as the Proton donor. Position 362 (Asp362) interacts with Ni(2+).

The protein belongs to the metallo-dependent hydrolases superfamily. Urease alpha subunit family. As to quaternary structure, heterotrimer of UreA (gamma), UreB (beta) and UreC (alpha) subunits. Three heterotrimers associate to form the active enzyme. Requires Ni cation as cofactor. In terms of processing, carboxylation allows a single lysine to coordinate two nickel ions.

It localises to the cytoplasm. The enzyme catalyses urea + 2 H2O + H(+) = hydrogencarbonate + 2 NH4(+). It participates in nitrogen metabolism; urea degradation; CO(2) and NH(3) from urea (urease route): step 1/1. In Synechococcus sp. (strain CC9311), this protein is Urease subunit alpha.